The following is a 915-amino-acid chain: Alpha-xylosidase 1 (915 aa).

The signal sequence occupies residues 1–27; the sequence is MASSSSSLAFSLSLLLALILCFSPTQS. 3 N-linked (GlcNAc...) asparagine glycosylation sites follow: Asn-153, Asn-304, and Asn-375. Residues Asp-440 and Glu-443 contribute to the active site. Asn-476 and Asn-490 each carry an N-linked (GlcNAc...) asparagine glycan. The Proton donor role is filled by Asp-563. Asn-819, Asn-888, and Asn-907 each carry an N-linked (GlcNAc...) asparagine glycan.

It belongs to the glycosyl hydrolase 31 family. In terms of tissue distribution, expressed in roots, stems, leaves, flowers and siliques. Expressed in cell types undergoing cell wall modifications, including trichomes, vasculature, stomata, and elongating anther filaments. Not detected in pollen.

The protein resides in the secreted. It is found in the cell wall. It localises to the extracellular space. Its subcellular location is the apoplast. The catalysed reaction is Hydrolysis of terminal, non-reducing alpha-D-xylose residues with release of alpha-D-xylose.. Functionally, glycoside hydrolase releasing xylosyl residues from xyloglucan oligosaccharides at the non-reducing end. Has alpha-xylosidase activity against xylan oligosaccharides. Also has alpha-glucosidase activity against p-nitrophenyl-alpha-D-glucopyranoside. No activity against p-nitrophenyl-D-xyloside. This Arabidopsis thaliana (Mouse-ear cress) protein is Alpha-xylosidase 1.